A 324-amino-acid polypeptide reads, in one-letter code: NADH-ubiquinone oxidoreductase chain 1 (324 aa).

Helical transmembrane passes span 3–23, 73–93, 106–126, 151–171, 175–195, 226–246, 255–275, and 295–315; these read LLFMYLLPLLYIAPILLAVAF, LLFILAPTLALALAMIMWTPF, ILFILAISSLTVYTILGSGWA, ALIILCSVLLAGGFTLSAFAI, FTWFILPLWPMFLMWFVSTLA, LFFLAEYANILMMNTLSTIIF, TLTTSLLMTKASILSLCFLWV, and FLPLTLALVILYVSMPISLLF.

Belongs to the complex I subunit 1 family.

The protein resides in the mitochondrion inner membrane. The enzyme catalyses a ubiquinone + NADH + 5 H(+)(in) = a ubiquinol + NAD(+) + 4 H(+)(out). Core subunit of the mitochondrial membrane respiratory chain NADH dehydrogenase (Complex I) that is believed to belong to the minimal assembly required for catalysis. Complex I functions in the transfer of electrons from NADH to the respiratory chain. The immediate electron acceptor for the enzyme is believed to be ubiquinone. The polypeptide is NADH-ubiquinone oxidoreductase chain 1 (MT-ND1) (Aquarana catesbeiana (American bullfrog)).